The following is a 207-amino-acid chain: Ribonuclease HII (207 aa).

Residues 18–207 (TYLSGSDEAG…PIKKISKETS (190 aa)) enclose the RNase H type-2 domain. 3 residues coordinate a divalent metal cation: aspartate 24, glutamate 25, and aspartate 116.

This sequence belongs to the RNase HII family. It depends on Mn(2+) as a cofactor. Requires Mg(2+) as cofactor.

The protein localises to the cytoplasm. The enzyme catalyses Endonucleolytic cleavage to 5'-phosphomonoester.. In terms of biological role, endonuclease that specifically degrades the RNA of RNA-DNA hybrids. In Mycoplasma mycoides subsp. mycoides SC (strain CCUG 32753 / NCTC 10114 / PG1), this protein is Ribonuclease HII.